Here is a 207-residue protein sequence, read N- to C-terminus: Large ribosomal subunit protein uL4 (207 aa).

The segment at 56–76 is disordered; sequence EVRGGGRKPWRQKGTGRARAG. The span at 60–71 shows a compositional bias: basic residues; sequence GGRKPWRQKGTG.

It belongs to the universal ribosomal protein uL4 family. As to quaternary structure, part of the 50S ribosomal subunit.

In terms of biological role, one of the primary rRNA binding proteins, this protein initially binds near the 5'-end of the 23S rRNA. It is important during the early stages of 50S assembly. It makes multiple contacts with different domains of the 23S rRNA in the assembled 50S subunit and ribosome. Functionally, forms part of the polypeptide exit tunnel. The sequence is that of Large ribosomal subunit protein uL4 from Desulfitobacterium hafniense (strain DSM 10664 / DCB-2).